The primary structure comprises 81 residues: Kappa-theraphotoxin-Gr2c (81 aa).

The first 19 residues, 1–19 (MKAFFVILGLALLCAYSFA), serve as a signal peptide directing secretion. The propeptide occupies 20–50 (LEEQDQLSLRNDLLTVMFAENSELTPETEER). Cystine bridges form between cysteine 52/cysteine 66, cysteine 59/cysteine 71, and cysteine 65/cysteine 75.

It belongs to the neurotoxin 30 (phrixotoxin) family. As to expression, expressed by the venom gland.

The protein resides in the secreted. Inhibits sodium channels Nav1.1/SCN1A (IC(50)=5.7 uM), Nav1.2/SCN2A (IC(50)=12 uM), Nav1.4/SCN4A (IC(50)=4 uM), Nav1.6/SCN8A (IC(50)=6.6 uM), Nav1.7/SCN9A (IC(50)=13.6-1030 nM), potassium channels Kv11.1/KCNH2 (IC(50)=4.7 uM), as well as high-voltage-gated calcium channels Cav1.2/CACNA1C (IC(50)= nM). Also blocks mechanosensitive ion channels (also named stretch-activated channels or SACs) and the hypotonic cell swelling induced calcium increase associated with the activation of such channels. It can thus be useful in treating cardiac ventricular disturbances. Also induces analgesia in mammals. In Grammostola rosea (Chilean rose tarantula), this protein is Kappa-theraphotoxin-Gr2c.